Here is a 441-residue protein sequence, read N- to C-terminus: MPLPNQIATSNVETKNFASLKRSDEPIAIAQASRTPAKIYFDFQATTPVDPRVLDAMLPYFTKKYGNPHSRTHSFGWESEKAVETARKQVADLIGAHEKEIIFTSGATESNNLAIKGAVDWKAQDGNPVHVITTQVEHKCVLDSMRFLEEKGARVTYMKVNKDGVIDLEELKRSISDDTVLVSIMGVNNEIGTVQPLEEIGKICKERNVLFHCDAAQMFGKLKIDVNKMNIDLLSISGHKIYGPKGVGALYVRRRPRVRLVPLFSGGGQERGLRSGTLPTPLIVGLGKAAAVCQEEMQRDLSWIESLSKKLYTCLKENIPNVIKNGSLQTNPLRWFPGCLNLSFPHVEGEGLLMALKNIALSSGSACTSASLEPSYVLRALGNDDELAHSSIRFGIGRFTTPCEIKEVAKQTTSAVKKLRDMSPLYEMEQEGIDLKTIKWT.

Pyridoxal 5'-phosphate is bound by residues 107 to 108 (AT), asparagine 189, glutamine 217, and 237 to 239 (SGH). Position 240 is an N6-(pyridoxal phosphate)lysine (lysine 240). Threonine 277 provides a ligand contact to pyridoxal 5'-phosphate. The active-site Cysteine persulfide intermediate is the cysteine 367. Position 367 (cysteine 367) interacts with [2Fe-2S] cluster.

The protein belongs to the class-V pyridoxal-phosphate-dependent aminotransferase family. NifS/IscS subfamily. Interacts with ISD11. The cofactor is pyridoxal 5'-phosphate.

It is found in the mitosome. The catalysed reaction is (sulfur carrier)-H + L-cysteine = (sulfur carrier)-SH + L-alanine. In terms of biological role, catalyzes the removal of elemental sulfur from cysteine to produce alanine. It supplies the inorganic sulfur for iron-sulfur (Fe-S) clusters in mitosomes. The polypeptide is Cysteine desulfurase, mitosomal (Trachipleistophora hominis (Microsporidian parasite)).